We begin with the raw amino-acid sequence, 1434 residues long: DNA-directed RNA polymerase subunit beta (1434 aa).

The protein belongs to the RNA polymerase beta chain family. In terms of assembly, the RNAP catalytic core consists of 2 alpha, 1 beta, 1 beta' and 1 omega subunit. When a sigma factor is associated with the core the holoenzyme is formed, which can initiate transcription.

The catalysed reaction is RNA(n) + a ribonucleoside 5'-triphosphate = RNA(n+1) + diphosphate. In terms of biological role, DNA-dependent RNA polymerase catalyzes the transcription of DNA into RNA using the four ribonucleoside triphosphates as substrates. This Ureaplasma urealyticum serovar 10 (strain ATCC 33699 / Western) protein is DNA-directed RNA polymerase subunit beta.